The primary structure comprises 123 residues: Large ribosomal subunit protein bL12 (123 aa).

Belongs to the bacterial ribosomal protein bL12 family. In terms of assembly, homodimer. Part of the ribosomal stalk of the 50S ribosomal subunit. Forms a multimeric L10(L12)X complex, where L10 forms an elongated spine to which 2 to 4 L12 dimers bind in a sequential fashion. Binds GTP-bound translation factors.

In terms of biological role, forms part of the ribosomal stalk which helps the ribosome interact with GTP-bound translation factors. Is thus essential for accurate translation. This Cytophaga hutchinsonii (strain ATCC 33406 / DSM 1761 / CIP 103989 / NBRC 15051 / NCIMB 9469 / D465) protein is Large ribosomal subunit protein bL12.